The following is a 1179-amino-acid chain: ATP-dependent helicase/deoxyribonuclease subunit B (1179 aa).

Belongs to the helicase family. AddB/RexB type 2 subfamily. Heterodimer of AddA and RexB. The cofactor is Mg(2+).

Functionally, the heterodimer acts as both an ATP-dependent DNA helicase and an ATP-dependent, dual-direction single-stranded exonuclease. Recognizes the chi site generating a DNA molecule suitable for the initiation of homologous recombination. This subunit has 5' -&gt; 3' nuclease activity but not helicase activity. The sequence is that of ATP-dependent helicase/deoxyribonuclease subunit B from Lacticaseibacillus paracasei (strain ATCC 334 / BCRC 17002 / CCUG 31169 / CIP 107868 / KCTC 3260 / NRRL B-441) (Lactobacillus paracasei).